Consider the following 246-residue polypeptide: tRNA (guanine-N(7)-)-methyltransferase (246 aa).

Residues E77, E102, D129, and D152 each contribute to the S-adenosyl-L-methionine site. D152 is a catalytic residue. Residues K156, D188, and 225 to 228 (TKFE) contribute to the substrate site.

The protein belongs to the class I-like SAM-binding methyltransferase superfamily. TrmB family.

It carries out the reaction guanosine(46) in tRNA + S-adenosyl-L-methionine = N(7)-methylguanosine(46) in tRNA + S-adenosyl-L-homocysteine. Its pathway is tRNA modification; N(7)-methylguanine-tRNA biosynthesis. Its function is as follows. Catalyzes the formation of N(7)-methylguanine at position 46 (m7G46) in tRNA. The sequence is that of tRNA (guanine-N(7)-)-methyltransferase from Haemophilus influenzae (strain PittEE).